The chain runs to 80 residues: Trefoil factor 3 (80 aa).

The first 23 residues, Met-1–Ala-23, serve as a signal peptide directing secretion. Positions Asn-30–Leu-73 constitute a P-type domain. 3 disulfides stabilise this stretch: Cys-32–Cys-58, Cys-42–Cys-57, and Cys-52–Cys-69.

In terms of assembly, monomer. Homodimer; disulfide-linked.

It localises to the secreted. Its subcellular location is the extracellular space. It is found in the extracellular matrix. The protein localises to the cytoplasm. Functionally, involved in the maintenance and repair of the intestinal mucosa. Promotes the mobility of epithelial cells in healing processes (motogen). The sequence is that of Trefoil factor 3 (TFF3) from Canis lupus familiaris (Dog).